A 491-amino-acid polypeptide reads, in one-letter code: Trypanothione reductase (491 aa).

35 to 52 is an FAD binding site; that stretch reads DVQATHGPPALVALGGTC. Cysteines 52 and 57 form a disulfide. The active-site Proton acceptor is histidine 461.

Belongs to the class-I pyridine nucleotide-disulfide oxidoreductase family. Homodimer. Requires FAD as cofactor.

It localises to the cytoplasm. The catalysed reaction is trypanothione + NADP(+) = trypanothione disulfide + NADPH + H(+). In terms of biological role, trypanothione is the parasite analog of glutathione; this enzyme is the equivalent of glutathione reductase. The chain is Trypanothione reductase (TPR) from Leishmania donovani.